The following is a 514-amino-acid chain: Probable type III restriction-modification enzyme HindVIP Res subunit (514 aa).

Belongs to the type III restriction-modification system Res protein family. Contains two different subunits: Res and Mod. Requires Mg(2+) as cofactor. It depends on S-adenosyl-L-methionine as a cofactor.

The catalysed reaction is Endonucleolytic cleavage of DNA to give specific double-stranded fragments with terminal 5'-phosphates.. In terms of biological role, a type III restriction enzyme that recognizes 2 inversely oriented double-stranded sequences 5'-CGAAT-3' and cleaves 25-27 base pairs downstream. After binding to one recognition site undergoes random one-dimensional diffusion along DNA until it collides with a stationary enzyme bound to the second DNA site, which is when DNA cleavage occurs. DNA restriction requires both the Res and Mod subunits. This is Probable type III restriction-modification enzyme HindVIP Res subunit from Haemophilus influenzae (strain ATCC 51907 / DSM 11121 / KW20 / Rd).